Consider the following 192-residue polypeptide: RNA-free ribonuclease P (192 aa).

This sequence belongs to the HARP family.

It catalyses the reaction Endonucleolytic cleavage of RNA, removing 5'-extranucleotides from tRNA precursor.. RNA-free RNase P that catalyzes the removal of the 5'-leader sequence from pre-tRNA to produce the mature 5'-terminus. This is RNA-free ribonuclease P from Alkalilimnicola ehrlichii (strain ATCC BAA-1101 / DSM 17681 / MLHE-1).